A 1827-amino-acid chain; its full sequence is Phenolphthiocerol/phthiocerol polyketide synthase subunit C (1827 aa).

The Ketosynthase family 3 (KS3) domain maps to 35-461 (CEPVAVVGIG…GTNAHVVVEQ (427 aa)). Active-site for beta-ketoacyl synthase activity residues include C207, H342, and H383. Positions 566-876 (VFVYSGQGSQ…LAAVGVAASE (311 aa)) are acyltransferase. Residue S654 is the For malonyltransferase activity of the active site. The segment at 910-1037 (HPLLGAHIEM…AKVEQSPREC (128 aa)) is N-terminal hotdog fold. Residues 910–1076 (HPLLGAHIEM…QHHGPAFAAL (167 aa)) are dehydratase. The 289-residue stretch at 910–1198 (HPLLGAHIEM…LRRVERRAVP (289 aa)) folds into the PKS/mFAS DH domain. The Proton acceptor; for dehydratase activity role is filled by H942. Residues 1050 to 1198 (GTTVSPADFY…LRRVERRAVP (149 aa)) are C-terminal hotdog fold. D1111 functions as the Proton donor; for dehydratase activity in the catalytic mechanism. A beta-ketoacyl reductase region spans residues 1439-1617 (ASYVVTGGLG…VINWGPWSEV (179 aa)). 1440–1485 (SYVVTGGLGGLGLVVARWLVDRGAGRVVLGGRSDPTDEQCNVLAEL) provides a ligand contact to NADP(+). Positions 1706-1785 (RAVTERMCAR…DLTADLMRQL (80 aa)) constitute a Carrier domain. O-(pantetheine 4'-phosphoryl)serine is present on S1745. The segment covering 1807–1820 (RAAARHGAAMRRRP) has biased composition (basic residues). The tract at residues 1807-1827 (RAAARHGAAMRRRPKPEVQGG) is disordered.

It depends on NADP(+) as a cofactor. Requires pantetheine 4'-phosphate as cofactor.

The catalysed reaction is icosanoyl-[(phenol)carboxyphthiodiolenone synthase] + 2 (S)-methylmalonyl-CoA + 3 malonyl-CoA + 5 NADPH + 10 H(+) = C32-carboxyphthiodiolenone-[(phenol)carboxyphthiodiolenone synthase] + 5 CO2 + 5 NADP(+) + 5 CoA + 2 H2O. It carries out the reaction docosanoyl-[(phenol)carboxyphthiodiolenone synthase] + 2 (S)-methylmalonyl-CoA + 3 malonyl-CoA + 5 NADPH + 10 H(+) = C34-carboxyphthiodiolenone-[(phenol)carboxyphthiodiolenone synthase] + 5 CO2 + 5 NADP(+) + 5 CoA + 2 H2O. The enzyme catalyses 17-(4-hydroxyphenyl)heptadecanoyl-[(phenol)carboxyphthiodiolenone synthase] + 2 (S)-methylmalonyl-CoA + 3 malonyl-CoA + 5 NADPH + 10 H(+) = C35-(phenol)carboxyphthiodiolenone-[(phenol)carboxyphthiodiolenone synthase] + 5 CO2 + 5 NADP(+) + 5 CoA + 2 H2O. It catalyses the reaction 19-(4-hydroxyphenyl)nonadecanoyl-[(phenol)carboxyphthiodiolenone synthase] + 2 (S)-methylmalonyl-CoA + 3 malonyl-CoA + 5 NADPH + 10 H(+) = C37-(phenol)carboxyphthiodiolenone-[(phenol)carboxyphthiodiolenone synthase] + 5 CO2 + 5 NADP(+) + 5 CoA + 2 H2O. Its pathway is lipid metabolism; fatty acid biosynthesis. Its function is as follows. Part of the PpsABCDE complex involved in the biosynthesis of the lipid core common to phthiocerols and phenolphthiocerols by successive additions of malonyl-CoA or methylmalonyl-CoA extender units. PpsA can accept as substrate the activated forms of either icosanoyl (C20), docosanoyl (C22) or lignoceroyl (C24) groups from FadD26, or a (4-hydroxyphenyl)-C17 or (4-hydroxyphenyl)-C19 fatty acyl from FadD29. PpsA initiates the biosynthesis and extends its substrate using a malonyl-CoA extender unit. The PpsB and PpsC proteins add the second and third malonyl-CoA extender units. PpsD adds an (R)-methylmalonyl unit and PpsE adds a second (R)-methylmalonyl unit. The incorporation of the methylmalonyl units results in formation of two branched methyl groups in the elongated product. The protein is Phenolphthiocerol/phthiocerol polyketide synthase subunit C (ppsD) of Mycobacterium tuberculosis (strain CDC 1551 / Oshkosh).